An 836-amino-acid polypeptide reads, in one-letter code: Transcriptional regulatory protein UME6 (836 aa).

Residues 1–14 (MLDKARSQSKHMDE) are compositionally biased toward basic and acidic residues. 4 disordered regions span residues 1–77 (MLDK…IESL), 92–168 (STCA…CNGH), 218–332 (HLPP…DDQC), and 381–464 (NESS…GFFY). Polar residues-rich tracts occupy residues 39–48 (SRATLMNSSQ), 61–77 (GANSRHPTISSASIESL), and 92–112 (STCAPNNTPVHTPSGSPSLKV). A Phosphoserine modification is found at Ser114. Residues 117–126 (DIKDDPKEND) are compositionally biased toward basic and acidic residues. Ser141, Ser150, and Ser228 each carry phosphoserine. Residues 226–236 (AVSSPGTTAAG) are compositionally biased toward low complexity. The span at 258–272 (TSANKNNGKTTNSPM) shows a compositional bias: polar residues. Over residues 273–305 (SILSRNNSTNNNDNNSIQSSDSRESSNNNEIGG) the composition is skewed to low complexity. 2 positions are modified to phosphoserine: Ser316 and Ser318. Residues 316–325 (SPSNDSQVQH) are compositionally biased toward polar residues. Residues 381–398 (NESSSNNASSNTDTPTNS) show a composition bias toward low complexity. Residues 399–414 (RHANTSSSITSRNNFQ) show a composition bias toward polar residues. The span at 426 to 446 (PTSASSFTSTNNNNPQRNNIN) shows a compositional bias: low complexity. Residues 508-594 (NSASSSTKLD…QPIFESNNST (87 aa)) are SIN3-binding. Positions 636–766 (NGKRIDRRLS…ATSSTSQGTR (131 aa)) are disordered. Ser645 is subject to Phosphoserine. The segment covering 670–679 (VASQTNSDYN) has biased composition (polar residues). Residues 680–702 (SLGESSTSSAPSSPSLKASSGLA) show a composition bias toward low complexity. A compositionally biased stretch (basic residues) spans 718 to 739 (SKGKNVKPKAKSKAKQSSKKRP). A compositionally biased stretch (low complexity) spans 740–751 (NNTTSKSKANNS). Residues 771 to 798 (CWICRLRKKKCTEERPHCFNCERLKLDC) constitute a DNA-binding region (zn(2)-C6 fungal-type).

As to quaternary structure, component of the RPD3C(L) complex composed of at least ASH1, CTI6, DEP1, PHO23, RPD3, RXT2, RXT3, SAP30, SDS3, SIN3, UME1 and UME6. Interacts with RIM11, MCK1 and IME1. Post-translationally, phosphorylated by RIM11 and MCK1.

The protein localises to the nucleus. Its function is as follows. Component of the RPD3C(L) histone deacetylase complex (HDAC) responsible for the deacetylation of lysine residues on the N-terminal part of the core histones (H2A, H2B, H3 and H4). Histone deacetylation gives a tag for epigenetic repression and plays an important role in transcriptional regulation, cell cycle progression and developmental events. Binds to the URS1 site (5'-AGCCGCCGA-3') and recruits the RPD3 histone deacetylase complex to the promoters to negatively regulate the expression of many genes including CAR1 (arginase), several required for sporulation, mating type switching, inositol metabolism, and oxidative carbon metabolism. Also recruits the ISW2 chromatin remodeling complex to promoters in a second gene repression pathway. Associates with the master regulator of meiosis IME1 in order to activate the expression of meiosis genes. Has both a positive and negative role in regulating phospholipid biosynthesis. This is Transcriptional regulatory protein UME6 (UME6) from Saccharomyces cerevisiae (strain ATCC 204508 / S288c) (Baker's yeast).